We begin with the raw amino-acid sequence, 95 residues long: Aspartyl/glutamyl-tRNA(Asn/Gln) amidotransferase subunit C (95 aa).

It belongs to the GatC family. As to quaternary structure, heterotrimer of A, B and C subunits.

It catalyses the reaction L-glutamyl-tRNA(Gln) + L-glutamine + ATP + H2O = L-glutaminyl-tRNA(Gln) + L-glutamate + ADP + phosphate + H(+). It carries out the reaction L-aspartyl-tRNA(Asn) + L-glutamine + ATP + H2O = L-asparaginyl-tRNA(Asn) + L-glutamate + ADP + phosphate + 2 H(+). Allows the formation of correctly charged Asn-tRNA(Asn) or Gln-tRNA(Gln) through the transamidation of misacylated Asp-tRNA(Asn) or Glu-tRNA(Gln) in organisms which lack either or both of asparaginyl-tRNA or glutaminyl-tRNA synthetases. The reaction takes place in the presence of glutamine and ATP through an activated phospho-Asp-tRNA(Asn) or phospho-Glu-tRNA(Gln). The polypeptide is Aspartyl/glutamyl-tRNA(Asn/Gln) amidotransferase subunit C (Chelativorans sp. (strain BNC1)).